The sequence spans 103 residues: Putative double-stranded DNA mimic protein HAPS_1002 (103 aa).

It belongs to the putative dsDNA mimic protein family.

Functionally, may act as a double-stranded DNA (dsDNA) mimic. Probably regulates the activity of a dsDNA-binding protein. The chain is Putative double-stranded DNA mimic protein HAPS_1002 from Glaesserella parasuis serovar 5 (strain SH0165) (Haemophilus parasuis).